A 131-amino-acid chain; its full sequence is Global transcriptional regulator Spx (131 aa).

An intrachain disulfide couples Cys10 to Cys13.

The protein belongs to the ArsC family. Spx subfamily. As to quaternary structure, interacts with the C-terminal domain of the alpha subunit of the RNAP.

The protein localises to the cytoplasm. Functionally, global transcriptional regulator that plays a key role in stress response and exerts either positive or negative regulation of genes. Acts by interacting with the C-terminal domain of the alpha subunit of the RNA polymerase (RNAP). This interaction can enhance binding of RNAP to the promoter region of target genes and stimulate their transcription, or block interaction of RNAP with activator. The polypeptide is Global transcriptional regulator Spx (Shouchella clausii (strain KSM-K16) (Alkalihalobacillus clausii)).